We begin with the raw amino-acid sequence, 238 residues long: Transcription factor PCL1 (238 aa).

The segment covering 71-90 has biased composition (low complexity); it reads RLRRASSSSSSSFPAFASKG. Residues 71–119 form a disordered region; the sequence is RLRRASSSSSSSFPAFASKGAGTGADEAESGGGADGGNGNTNNSSSKRA. Residues 100–109 show a composition bias toward gly residues; it reads SGGGADGGNG. Residues 115–174 constitute a DNA-binding region (myb-like GARP); it reads SSKRARLVWTPQLHKRFVEVVAHLGMKNAVPKTIMQLMNVEGLTRENVASHLQKYRLYVK.

It is found in the nucleus. Transcription factor that is essential for the generation of the circadian clock oscillation. Binds to specific sites on CCA1 promoter leading to CCA1 activation. This chain is Transcription factor PCL1 (PCL1), found in Oryza sativa subsp. japonica (Rice).